A 242-amino-acid chain; its full sequence is Probable transcriptional regulatory protein mhp472 (242 aa).

Belongs to the TACO1 family.

The protein resides in the cytoplasm. The protein is Probable transcriptional regulatory protein mhp472 of Mesomycoplasma hyopneumoniae (strain 232) (Mycoplasma hyopneumoniae).